Here is a 267-residue protein sequence, read N- to C-terminus: Protein PERCC1 (267 aa).

Disordered stretches follow at residues 19–88 (HHPF…QLLR), 142–163 (SLED…RPGL), and 247–267 (ACPE…PAEA). Residues 28-50 (EPPETSEEEEEEEEEEEEEEGEG) show a composition bias toward acidic residues. Low complexity predominate over residues 74-83 (PEGPGSPETP).

Plays a critical role in intestinal function. Acts by promoting the development of enteroendocrine cells (EECs) of the gastrointestinal tract and pancreas. It is thereby required for normal enteroendocrine peptide hormone secretion. The sequence is that of Protein PERCC1 from Homo sapiens (Human).